The chain runs to 141 residues: Large ribosomal subunit protein uL11B (141 aa).

It belongs to the universal ribosomal protein uL11 family. Part of the ribosomal stalk of the 50S ribosomal subunit. Interacts with L10 and the large rRNA to form the base of the stalk. L10 forms an elongated spine to which L12 dimers bind in a sequential fashion forming a multimeric L10(L12)X complex. Post-translationally, one or more lysine residues are methylated.

Its function is as follows. Forms part of the ribosomal stalk which helps the ribosome interact with GTP-bound translation factors. The sequence is that of Large ribosomal subunit protein uL11B from Halalkalibacterium halodurans (strain ATCC BAA-125 / DSM 18197 / FERM 7344 / JCM 9153 / C-125) (Bacillus halodurans).